A 786-amino-acid chain; its full sequence is E3 ubiquitin-protein ligase UHRF1 (786 aa).

The Ubiquitin-like domain maps to 1–78 (MWIQVRTMDG…IQLLVRQSLV (78 aa)). Phosphoserine occurs at positions 76, 98, and 102. The disordered stretch occupies residues 82-134 (PVPSSSGGSKERDSELSDTDSGCGLAQSESDKSSNSGEAANEPEGKADEDECD). 2 tudor-like regions span residues 139 to 213 (GLYK…ARAR) and 220 to 287 (DLQV…IERP). A Glycyl lysine isopeptide (Lys-Gly) (interchain with G-Cter in SUMO2) cross-link involves residue Lys-283. The tract at residues 300-305 (RKSGPS) is linker. Phosphoserine; by PKA is present on Ser-302. The PHD-type zinc finger occupies 303–370 (GPSCKHCKDD…EWYCPDCRID (68 aa)). Histone H3R2me0 binding stretches follow at residues 337 to 341 (CDECD) and 357 to 359 (PPE). Position 372 is a phosphoserine (Ser-372). Residue Lys-389 forms a Glycyl lysine isopeptide (Lys-Gly) (interchain with G-Cter in SUMO2) linkage. The residue at position 403 (Lys-403) is an N6-acetyllysine. The YDG domain occupies 423–586 (GPIPGIPVGT…FLVWRFLLRR (164 aa)). The required to promote base flipping stretch occupies residues 449–450 (HV). Residues 467–468 (AG) and Asp-473 contribute to the DNA site. Required for formation of a 5-methylcytosine-binding pocket stretches follow at residues 470–473 (YEDD) and 482–485 (YTGS). Lys-550 bears the N6-acetyllysine; alternate mark. Lys-550 is covalently cross-linked (Glycyl lysine isopeptide (Lys-Gly) (interchain with G-Cter in SUMO2); alternate). The segment at 626–679 (NSKQAALDKEEEDGEEGFTSPRKGKRKSKSAGGDGSSRGTPKKTKVEPYSLTTQ) is disordered. Residue Ser-645 is modified to Phosphoserine; by CDK1. Phosphoserine occurs at positions 655 and 662. A Glycyl lysine isopeptide (Lys-Gly) (interchain with G-Cter in SUMO2) cross-link involves residue Lys-670. The RING-type zinc finger occupies 717-756 (CICCQELVFRPITTVCQHNVCKDCLDRSFKAQVFSCPACR).

Interacts with DNMT3A and DNMT3B. Interacts with DNMT1; the interaction is direct. Interacts with USP7; leading to its deubiquitination. Interacts with histone H3. Interacts with HDAC1, but not with HDAC2. Interacts with BLTP3A. Interacts with PML. Interacts with EHMT2. Binds methylated CpG containing oligonucleotides. Interacts with ZNF263; recruited to the SIX3 promoter along with other proteins involved in chromatin modification and transcriptional corepression where it contributes to transcriptional repression. Interacts with UHRF2. Interacts with FANCD2. Interacts with TET1 isoform 2; this interaction induces the recruitment of TET1 isoform 2 to replicating heterochromatin. Post-translationally, phosphorylation at Ser-302 of the linker region decreases the binding to H3K9me3. Phosphorylation at Ser-645 by CDK1 during M phase impairs interaction with USP7, preventing deubiquitination and leading to degradation by the proteasome. In terms of processing, ubiquitinated; which leads to proteasomal degradation. Autoubiquitinated; interaction with USP7 leads to deubiquitination and prevents degradation. Ubiquitination and degradation takes place during M phase, when phosphorylation at Ser-645 prevents interaction with USP7 and subsequent deubiquitination. Polyubiquitination may be stimulated by DNA damage.

Its subcellular location is the nucleus. The enzyme catalyses S-ubiquitinyl-[E2 ubiquitin-conjugating enzyme]-L-cysteine + [acceptor protein]-L-lysine = [E2 ubiquitin-conjugating enzyme]-L-cysteine + N(6)-ubiquitinyl-[acceptor protein]-L-lysine.. Its pathway is protein modification; protein ubiquitination. Functionally, multidomain protein that acts as a key epigenetic regulator by bridging DNA methylation and chromatin modification. Specifically recognizes and binds hemimethylated DNA at replication forks via its YDG domain and recruits DNMT1 methyltransferase to ensure faithful propagation of the DNA methylation patterns through DNA replication. In addition to its role in maintenance of DNA methylation, also plays a key role in chromatin modification: through its tudor-like regions and PHD-type zinc fingers, specifically recognizes and binds histone H3 trimethylated at 'Lys-9' (H3K9me3) and unmethylated at 'Arg-2' (H3R2me0), respectively, and recruits chromatin proteins. Enriched in pericentric heterochromatin where it recruits different chromatin modifiers required for this chromatin replication. Also localizes to euchromatic regions where it negatively regulates transcription possibly by impacting DNA methylation and histone modifications. Has E3 ubiquitin-protein ligase activity by mediating the ubiquitination of target proteins such as histone H3 and PML. It is still unclear how E3 ubiquitin-protein ligase activity is related to its role in chromatin in vivo. Plays a role in DNA repair by cooperating with UHRF2 to ensure recruitment of FANCD2 to interstrand cross-links (ICLs) leading to FANCD2 activation. Plays a pivotal role in the establishment of correct spindle architecture by catalyzing the 'Lys-63'-linked ubiquitination of KIF11, thereby controlling KIF11 localization on the spindle. This Bos taurus (Bovine) protein is E3 ubiquitin-protein ligase UHRF1 (UHRF1).